We begin with the raw amino-acid sequence, 691 residues long: Pentatricopeptide repeat-containing protein ATP4, chloroplastic (691 aa).

Positions 1 to 17 are enriched in low complexity; sequence MASLPLCRSPSSLLPSW. The N-terminal 35 residues, 1–35, are a transit peptide targeting the chloroplast; it reads MASLPLCRSPSSLLPSWPHRPISASFNPKNPSSPV. The tract at residues 1 to 76 is disordered; sequence MASLPLCRSP…SSNTRFLWVN (76 aa). Over residues 24-33 the composition is skewed to polar residues; the sequence is ASFNPKNPSS. Residues 45–56 are compositionally biased toward pro residues; it reads PPQPQDPSPPSD. The segment covering 61 to 76 has biased composition (polar residues); that stretch reads GTRPSSSSNTRFLWVN. 10 PPR repeats span residues 163 to 197, 198 to 232, 233 to 267, 268 to 302, 303 to 337, 338 to 372, 373 to 403, 411 to 445, 446 to 480, and 546 to 580; these read KVIL…GVQP, DNAT…GCSP, DMLT…KWQL, DPVI…GVRP, NLVV…QVQP, SRAT…AMGI, DVML…MKAS, DSWS…GFKP, NIFV…GIIP, and KMPY…GIYA. One can recognise a Smr domain in the interval 592 to 677; that stretch reads LHLRGLSVGA…WFLTTNVAAK (86 aa).

The protein belongs to the PPR family. P subfamily.

The protein resides in the plastid. The protein localises to the chloroplast stroma. In terms of biological role, involved in translation and accumulation of chloroplast ATP synthase subunits. Interacts with the 5'-UTR of the chloroplast bicistronic atpB and atpE mRNA and activates its translation by facilitating ribosome association with the mRNA. Required for accumulation and activity of the chloroplast ATP synthase. Enhances atpA translation and is required for accumulation of specific processed atpF and psaJ transcripts. Required for the stabilization of bicistronic rpl16 and rpl14 mRNAs. The chain is Pentatricopeptide repeat-containing protein ATP4, chloroplastic from Zea mays (Maize).